A 91-amino-acid polypeptide reads, in one-letter code: Small ribosomal subunit protein bS16 (91 aa).

It belongs to the bacterial ribosomal protein bS16 family.

This chain is Small ribosomal subunit protein bS16, found in Ruthia magnifica subsp. Calyptogena magnifica.